The chain runs to 647 residues: Threonine--tRNA ligase (647 aa).

A TGS domain is found at 1–63; sequence MYMIQLTFPD…EHDGKIELVM (63 aa). The catalytic stretch occupies residues 247-544; that stretch reads DHRKLGKELD…LIEEYKGAFP (298 aa). Cys-340, His-391, and His-521 together coordinate Zn(2+).

It belongs to the class-II aminoacyl-tRNA synthetase family. Homodimer. Zn(2+) is required as a cofactor.

The protein localises to the cytoplasm. It catalyses the reaction tRNA(Thr) + L-threonine + ATP = L-threonyl-tRNA(Thr) + AMP + diphosphate + H(+). Functionally, catalyzes the attachment of threonine to tRNA(Thr) in a two-step reaction: L-threonine is first activated by ATP to form Thr-AMP and then transferred to the acceptor end of tRNA(Thr). Also edits incorrectly charged L-seryl-tRNA(Thr). The sequence is that of Threonine--tRNA ligase from Exiguobacterium sp. (strain ATCC BAA-1283 / AT1b).